A 404-amino-acid chain; its full sequence is Cysteine desulfurase IscS (404 aa).

Pyridoxal 5'-phosphate is bound by residues 75–76, Asn-155, Gln-183, and 203–205; these read AT and SAH. Position 206 is an N6-(pyridoxal phosphate)lysine (Lys-206). Thr-243 contacts pyridoxal 5'-phosphate. The active-site Cysteine persulfide intermediate is Cys-328. Residue Cys-328 coordinates [2Fe-2S] cluster.

Belongs to the class-V pyridoxal-phosphate-dependent aminotransferase family. NifS/IscS subfamily. In terms of assembly, homodimer. Forms a heterotetramer with IscU, interacts with other sulfur acceptors. Pyridoxal 5'-phosphate is required as a cofactor.

Its subcellular location is the cytoplasm. It catalyses the reaction (sulfur carrier)-H + L-cysteine = (sulfur carrier)-SH + L-alanine. Its pathway is cofactor biosynthesis; iron-sulfur cluster biosynthesis. In terms of biological role, master enzyme that delivers sulfur to a number of partners involved in Fe-S cluster assembly, tRNA modification or cofactor biosynthesis. Catalyzes the removal of elemental sulfur atoms from cysteine to produce alanine. Functions as a sulfur delivery protein for Fe-S cluster synthesis onto IscU, an Fe-S scaffold assembly protein, as well as other S acceptor proteins. The chain is Cysteine desulfurase IscS from Buchnera aphidicola subsp. Baizongia pistaciae (strain Bp).